The sequence spans 1860 residues: Probable helicase with zinc finger domain (1860 aa).

The C3H1-type zinc finger occupies 168 to 196 (SEEYTLCKRFLEQGLCRYGAQCTSAHSQE). Residue 661-668 (GPYGTGKT) participates in ATP binding. A DEAA box motif is present at residues 787–790 (DEAA). 6 disordered regions span residues 1106-1136 (RSQH…TEPF), 1158-1177 (TPPG…VQRL), 1286-1317 (ERKA…GFPA), 1556-1604 (IQPR…PPDH), 1641-1709 (RQDP…RYPS), and 1749-1860 (MSEE…TYFK). Over residues 1107–1116 (SQHPPQQGPG) the composition is skewed to low complexity. A compositionally biased stretch (basic and acidic residues) spans 1286–1298 (ERKAPELKEKQGD). A compositionally biased stretch (polar residues) spans 1301–1313 (SVQNKSPEPQSNM). The span at 1641-1660 (RQDPGPLQHQQQKQQLQAPQ) shows a compositional bias: low complexity. 2 stretches are compositionally biased toward pro residues: residues 1760-1769 (QPPPPPPPHP) and 1783-1794 (PLLPSKQTPPDP). Over residues 1847-1860 (GSSNSSNGYYTYFK) the composition is skewed to low complexity.

Belongs to the DNA2/NAM7 helicase family.

It localises to the nucleus. Functionally, may act as a helicase. The protein is Probable helicase with zinc finger domain (helz) of Danio rerio (Zebrafish).